Reading from the N-terminus, the 131-residue chain is Large ribosomal subunit protein uL22 (131 aa).

Over residues Met-1 to Arg-11 the composition is skewed to basic residues. Residues Met-1 to Arg-20 form a disordered region.

The protein belongs to the universal ribosomal protein uL22 family. As to quaternary structure, part of the 50S ribosomal subunit.

In terms of biological role, this protein binds specifically to 23S rRNA; its binding is stimulated by other ribosomal proteins, e.g. L4, L17, and L20. It is important during the early stages of 50S assembly. It makes multiple contacts with different domains of the 23S rRNA in the assembled 50S subunit and ribosome. The globular domain of the protein is located near the polypeptide exit tunnel on the outside of the subunit, while an extended beta-hairpin is found that lines the wall of the exit tunnel in the center of the 70S ribosome. This chain is Large ribosomal subunit protein uL22, found in Agathobacter rectalis (strain ATCC 33656 / DSM 3377 / JCM 17463 / KCTC 5835 / VPI 0990) (Eubacterium rectale).